We begin with the raw amino-acid sequence, 2530 residues long: Agglutinin-like protein 2 (2530 aa).

Positions 1-17 (MLLQFLLLSLCVSVATA) are cleaved as a signal peptide. Intrachain disulfides connect cysteine 73/cysteine 150, cysteine 96/cysteine 112, cysteine 205/cysteine 297, and cysteine 227/cysteine 256. Asparagine 253 and asparagine 315 each carry an N-linked (GlcNAc...) asparagine glycan. ALS repeat units lie at residues 364–395 (TTIT…VDVP), 400–431 (TTVT…VQVP), 437–468 (VTTT…IREP), 473–504 (VTTT…IREP), 509–540 (VTTT…IREP), and 545–576 (VTTT…IREP). Residue asparagine 578 is glycosylated (N-linked (GlcNAc...) asparagine). One copy of the ALS 7 repeat lies at 581–612 (VTTTEYWSQSYVTTSTITAPPGGTDTVIIREP). Asparagine 614 is a glycosylation site (N-linked (GlcNAc...) asparagine). ALS repeat units lie at residues 617 to 648 (VTTT…IREP), 653 to 684 (VTTT…IREP), 689 to 720 (VTTT…IREP), 725 to 756 (VTTT…IREP), 761 to 792 (VTTT…IREP), 797 to 828 (VTTT…IREP), and 833 to 864 (VTTT…IREP). N-linked (GlcNAc...) asparagine glycosylation occurs at asparagine 866. 4 ALS repeats span residues 869–900 (VTTT…IREP), 905–936 (VTTT…IREP), 941–972 (VTTT…IREP), and 977–1008 (VTTT…IREP). Low complexity predominate over residues 954–967 (TTTVTGPPGGTDTV). The interval 954–975 (TTTVTGPPGGTDTVIIREPPNP) is disordered. A glycan (N-linked (GlcNAc...) asparagine) is linked at asparagine 1010. ALS repeat units follow at residues 1013–1044 (VTTT…IREP), 1049–1077 (VTTT…TVII), 1085–1116 (VTTT…IREP), and 1121–1152 (VTTT…IREP). The N-linked (GlcNAc...) asparagine glycan is linked to asparagine 1154. ALS repeat units follow at residues 1157–1188 (VTTT…IREP), 1193–1224 (VTTT…IREP), 1229–1260 (VTTT…IREP), 1265–1296 (VTTT…IREP), 1301–1332 (VTTT…IREP), and 1337–1368 (VTTT…IREP). Asparagine 1370 is a glycosylation site (N-linked (GlcNAc...) asparagine). An ALS 29 repeat occupies 1373-1404 (VTTTEYWSQSYATTTTVTAPPGGTATVIIREP). Residue asparagine 1406 is glycosylated (N-linked (GlcNAc...) asparagine). Residues 1409 to 1440 (VTTTEYWSQSYATTTTITAPPGDTDTVIIREP) form an ALS 30 repeat. Residue asparagine 1442 is glycosylated (N-linked (GlcNAc...) asparagine). ALS repeat units lie at residues 1445–1476 (VTTT…IREP) and 1481–1512 (VTTT…IREP). N-linked (GlcNAc...) asparagine glycosylation is present at asparagine 1514. The ALS 33 repeat unit spans residues 1517 to 1548 (VTTTEYWSQSYATTTTVTAPPGGTATVIIREP). Asparagine 1550 carries N-linked (GlcNAc...) asparagine glycosylation. The stretch at 1553-1584 (VTTTEYWSQSYATTTTITAPPGDTDTVIIREP) is one ALS 34 repeat. Asparagine 1586 carries an N-linked (GlcNAc...) asparagine glycan. Residues 1589–1620 (VTTTEYWSQSYATTTTVTAPPGGTDTVIIREP) form an ALS 35 repeat. Residue asparagine 1622 is glycosylated (N-linked (GlcNAc...) asparagine). An ALS 36 repeat occupies 1625–1656 (VTTTEYWSQSYATTTTVTAPPGGTATVIIREP). Asparagine 1658 carries N-linked (GlcNAc...) asparagine glycosylation. ALS repeat units follow at residues 1661–1692 (VTTT…IREP) and 1697–1728 (VTTT…IREP). Asparagine 1730 carries N-linked (GlcNAc...) asparagine glycosylation. The stretch at 1733 to 1764 (VTTTEYWSQSYATTTTVTAPPGGTDTVIIREP) is one ALS 39 repeat. Residue asparagine 1766 is glycosylated (N-linked (GlcNAc...) asparagine). ALS repeat units lie at residues 1769–1800 (VTTT…IREP) and 1805–1836 (VTTT…IREP). Asparagine 1838 carries an N-linked (GlcNAc...) asparagine glycan. ALS repeat units lie at residues 1841–1872 (VTTT…IREP) and 1877–1907 (VTTT…RIRE). An N-linked (GlcNAc...) asparagine glycan is attached at asparagine 1910. 2 ALS repeats span residues 1913-1944 (VTTT…IREP) and 1949-1980 (VTTT…IREP). Residue asparagine 1982 is glycosylated (N-linked (GlcNAc...) asparagine). 3 ALS repeats span residues 1985-2016 (VTTT…IREP), 2021-2052 (VTTT…IREP), and 2057-2088 (VTTT…IREP). Asparagine 2090 carries N-linked (GlcNAc...) asparagine glycosylation. 2 ALS repeats span residues 2093-2124 (VTTT…IREP) and 2129-2157 (VTTT…SVII). An N-linked (GlcNAc...) asparagine glycan is attached at asparagine 2197. 2 disordered regions span residues 2200–2235 (VTHL…GSEN) and 2274–2494 (TTII…QQTT). A compositionally biased stretch (low complexity) spans 2204–2233 (PSSSSKPVDIPSSDVVTSTNDNSLTSLTGS). Asparagine 2281 is a glycosylation site (N-linked (GlcNAc...) asparagine). Over residues 2282–2296 (GSGKSKSGELSSTGS) the composition is skewed to low complexity. Polar residues-rich tracts occupy residues 2329–2420 (STET…SATA) and 2429–2452 (NGAT…TTNI). Residues asparagine 2444 and asparagine 2466 are each glycosylated (N-linked (GlcNAc...) asparagine). Low complexity-rich tracts occupy residues 2453-2471 (QGGN…TGEP) and 2482-2494 (SISQ…QQTT). Aspartate 2507 is lipidated: GPI-anchor amidated aspartate. Residues 2508 to 2530 (GSGSIVQHSGWLYVLLTAISIFF) constitute a propeptide, removed in mature form.

The protein belongs to the ALS family. N-glycosylated and O-glycosylated. Post-translationally, the GPI-anchor is attached to the protein in the endoplasmic reticulum and serves to target the protein to the cell surface. There, the glucosamine-inositol phospholipid moiety is cleaved off and the GPI-modified mannoprotein is covalently attached via its lipidless GPI glycan remnant to the 1,6-beta-glucan of the outer cell wall layer.

It is found in the cell membrane. The protein localises to the secreted. Its subcellular location is the cell wall. Its function is as follows. Cell surface adhesion protein which mediates both yeast-to-host tissue adherence and yeast aggregation. Plays an important role in the pathogenesis of C.albicans infections. The sequence is that of Agglutinin-like protein 2 (ALS2) from Candida albicans (strain SC5314 / ATCC MYA-2876) (Yeast).